The chain runs to 340 residues: Small ribosomal subunit biogenesis GTPase RsgA (340 aa).

Residues 20 to 34 (ERAERAERRARRDDT) are compositionally biased toward basic and acidic residues. The interval 20-42 (ERAERAERRARRDDTSLDAGDYG) is disordered. Positions 116–274 (RGQLKPVAAN…LIDSPGIREF (159 aa)) constitute a CP-type G domain. GTP contacts are provided by residues 163–166 (NKTD) and 216–224 (GQSGVGKSS). Zn(2+) is bound by residues Cys298, Cys303, His305, and Cys311.

It belongs to the TRAFAC class YlqF/YawG GTPase family. RsgA subfamily. As to quaternary structure, monomer. Associates with 30S ribosomal subunit, binds 16S rRNA. The cofactor is Zn(2+).

The protein localises to the cytoplasm. In terms of biological role, one of several proteins that assist in the late maturation steps of the functional core of the 30S ribosomal subunit. Helps release RbfA from mature subunits. May play a role in the assembly of ribosomal proteins into the subunit. Circularly permuted GTPase that catalyzes slow GTP hydrolysis, GTPase activity is stimulated by the 30S ribosomal subunit. The chain is Small ribosomal subunit biogenesis GTPase RsgA from Chromohalobacter salexigens (strain ATCC BAA-138 / DSM 3043 / CIP 106854 / NCIMB 13768 / 1H11).